Reading from the N-terminus, the 272-residue chain is 1,4-dihydroxy-2-naphthoyl-CoA synthase (272 aa).

Residues Arg-33, 72–76 (SGGDQ), Tyr-84, 116–120 (YAIGG), Thr-142, Ser-148, Tyr-245, and Lys-260 contribute to the substrate site. Position 141-143 (141-143 (QTG)) interacts with hydrogencarbonate.

This sequence belongs to the enoyl-CoA hydratase/isomerase family. MenB subfamily. The cofactor is hydrogencarbonate.

It catalyses the reaction 2-succinylbenzoyl-CoA + H(+) = 1,4-dihydroxy-2-naphthoyl-CoA + H2O. It participates in quinol/quinone metabolism; 1,4-dihydroxy-2-naphthoate biosynthesis; 1,4-dihydroxy-2-naphthoate from chorismate: step 6/7. Its pathway is quinol/quinone metabolism; menaquinone biosynthesis. Functionally, converts o-succinylbenzoyl-CoA (OSB-CoA) to 1,4-dihydroxy-2-naphthoyl-CoA (DHNA-CoA). In Staphylococcus epidermidis (strain ATCC 35984 / DSM 28319 / BCRC 17069 / CCUG 31568 / BM 3577 / RP62A), this protein is 1,4-dihydroxy-2-naphthoyl-CoA synthase.